Here is a 190-residue protein sequence, read N- to C-terminus: Adenine phosphoribosyltransferase (190 aa).

It belongs to the purine/pyrimidine phosphoribosyltransferase family. As to quaternary structure, homodimer.

The protein localises to the cytoplasm. The catalysed reaction is AMP + diphosphate = 5-phospho-alpha-D-ribose 1-diphosphate + adenine. Its pathway is purine metabolism; AMP biosynthesis via salvage pathway; AMP from adenine: step 1/1. Catalyzes a salvage reaction resulting in the formation of AMP, that is energically less costly than de novo synthesis. This is Adenine phosphoribosyltransferase from Cupriavidus taiwanensis (strain DSM 17343 / BCRC 17206 / CCUG 44338 / CIP 107171 / LMG 19424 / R1) (Ralstonia taiwanensis (strain LMG 19424)).